A 699-amino-acid polypeptide reads, in one-letter code: Lutropin-choriogonadotropic hormone receptor (699 aa).

The N-terminal stretch at 1–26 (MKQRFSALQLLKLLLLLQPPLPRALR) is a signal peptide. In terms of domain architecture, LRRNT spans 27-66 (EALCPEPCNCVPDGALRCPGPTAGLTRLSLAYLPVKVIPS). The Extracellular segment spans residues 27-363 (EALCPEPCNC…EDIMGYDFLR (337 aa)). 3 LRR repeats span residues 96–115 (NLLN…RYIE), 124–145 (RLKY…TKVF), and 149–171 (SNFI…AFQG). A glycan (N-linked (GlcNAc...) asparagine) is linked at Asn-99. Asn-174 and Asn-195 each carry an N-linked (GlcNAc...) asparagine glycan. 3 LRR repeats span residues 175 to 196 (ESVT…AFNG), 198 to 220 (TLTS…AFRG), and 223 to 244 (GPKT…GLES). 3 N-linked (GlcNAc...) asparagine glycosylation sites follow: Asn-291, Asn-299, and Asn-313. Tyr-331 is modified (sulfotyrosine). A helical transmembrane segment spans residues 364 to 385 (VLIWLINILAIMGNMTVLFVLL). Topologically, residues 386-395 (TSRYKLTVPR) are cytoplasmic. A helical transmembrane segment spans residues 396–416 (FLMCNLSFADFCMGLYLLLIA). Residues 417-439 (SVDSQTKGQYYNHAIDWQTGSGC) are Extracellular-facing. A disulfide bond links Cys-439 and Cys-514. Residues 440-462 (STAGFFTVFASELSVYTLTVITL) form a helical membrane-spanning segment. Residues 463–482 (ERWHTITYAIHLDQKLRLRH) are Cytoplasmic-facing. The chain crosses the membrane as a helical span at residues 483-505 (AILIMLGGWLFSSLIAMLPLVGV). Residues 506–525 (SNYMKVSICFPMDVETTLSQ) are Extracellular-facing. A helical membrane pass occupies residues 526-549 (VYILTILILNVVAFFIICACYIKI). Over 550 to 570 (YFAVRNPELMATNKDTKIAKK) the chain is Cytoplasmic. The helical transmembrane segment at 571–594 (MAILIFTDFTCMAPISFFAISAAF) threads the bilayer. Over 595-605 (KVPLITVTNSK) the chain is Extracellular. A helical membrane pass occupies residues 606–627 (VLLVLFYPINSCANPFLYAIFT). The Cytoplasmic portion of the chain corresponds to 628-699 (KTFQRDFFLL…LLDKTRYTEC (72 aa)). S-palmitoyl cysteine attachment occurs at residues Cys-643 and Cys-644.

It belongs to the G-protein coupled receptor 1 family. FSH/LSH/TSH subfamily. Sulfated. Gonadal and thyroid cells.

It is found in the cell membrane. Receptor for lutropin-choriogonadotropic hormone. The activity of this receptor is mediated by G proteins which activate adenylate cyclase. The protein is Lutropin-choriogonadotropic hormone receptor (LHCGR) of Homo sapiens (Human).